A 454-amino-acid chain; its full sequence is NEDD8-activating enzyme E1 catalytic subunit (454 aa).

Ala-2 bears the N-acetylalanine mark. Position 56 to 80 (56 to 80 (GLGCELLKDLALSGFRNLEVIDMDR)) interacts with ATP. Cys-215 (glycyl thioester intermediate) is an active-site residue.

The protein belongs to the ubiquitin-activating E1 family. UBA3 subfamily. As to quaternary structure, heterodimer of UBA3/ECR1 and AXR1. Interacts with NEDD8 and RCE1. In terms of tissue distribution, expressed in shoot, root and floral meristems, in vascular tissues of cotyledons and mature leaves, and in the stele of the root.

It is found in the nucleus. It carries out the reaction ATP + [NEDD8 protein] + [E1 NEDD8-activating enzyme]-L-cysteine = AMP + diphosphate + [E1 NEDD8-activating enzyme]-S-[NEDD8 protein]-yl-L-cysteine.. Its pathway is protein modification; protein neddylation. Its function is as follows. Catalytic subunit of the dimeric ECR1-AXR1 E1 enzyme. E1 activates NEDD8/RUB1 by first adenylating its C-terminal glycine residue with ATP, thereafter linking this residue to the side chain of the catalytic cysteine, yielding a NEDD8-ECR1 thioester and free AMP. E1 finally transfers NEDD8 to the catalytic cysteine of RCE1. This is NEDD8-activating enzyme E1 catalytic subunit (ECR1) from Arabidopsis thaliana (Mouse-ear cress).